The sequence spans 449 residues: UDP-N-acetylmuramoylalanine--D-glutamate ligase (449 aa).

An ATP-binding site is contributed by 118–124 (GTNGKTT).

Belongs to the MurCDEF family.

The protein localises to the cytoplasm. It catalyses the reaction UDP-N-acetyl-alpha-D-muramoyl-L-alanine + D-glutamate + ATP = UDP-N-acetyl-alpha-D-muramoyl-L-alanyl-D-glutamate + ADP + phosphate + H(+). It functions in the pathway cell wall biogenesis; peptidoglycan biosynthesis. In terms of biological role, cell wall formation. Catalyzes the addition of glutamate to the nucleotide precursor UDP-N-acetylmuramoyl-L-alanine (UMA). The chain is UDP-N-acetylmuramoylalanine--D-glutamate ligase from Staphylococcus carnosus (strain TM300).